Reading from the N-terminus, the 134-residue chain is Small ribosomal subunit protein uS8 (134 aa).

Belongs to the universal ribosomal protein uS8 family. In terms of assembly, part of the 30S ribosomal subunit. Contacts proteins S5 and S12.

One of the primary rRNA binding proteins, it binds directly to 16S rRNA central domain where it helps coordinate assembly of the platform of the 30S subunit. The sequence is that of Small ribosomal subunit protein uS8 from Petrotoga mobilis (strain DSM 10674 / SJ95).